Here is a 151-residue protein sequence, read N- to C-terminus: Aspartate carbamoyltransferase regulatory chain (151 aa).

Zn(2+) contacts are provided by Cys108, Cys113, Cys138, and Cys141.

The protein belongs to the PyrI family. As to quaternary structure, contains catalytic and regulatory chains. Requires Zn(2+) as cofactor.

In terms of biological role, involved in allosteric regulation of aspartate carbamoyltransferase. This Pyrobaculum islandicum (strain DSM 4184 / JCM 9189 / GEO3) protein is Aspartate carbamoyltransferase regulatory chain.